Here is a 226-residue protein sequence, read N- to C-terminus: Uracil phosphoribosyltransferase (226 aa).

A GTP-binding site is contributed by 36–40; the sequence is KGLVK. 5-phospho-alpha-D-ribose 1-diphosphate contacts are provided by residues arginine 86, arginine 111, and 145-153; that span reads DPMLATGST. Uracil is bound by residues isoleucine 211 and 216–218; that span reads GDA. Aspartate 217 is a binding site for 5-phospho-alpha-D-ribose 1-diphosphate.

This sequence belongs to the UPRTase family. Mg(2+) serves as cofactor.

It carries out the reaction UMP + diphosphate = 5-phospho-alpha-D-ribose 1-diphosphate + uracil. Its pathway is pyrimidine metabolism; UMP biosynthesis via salvage pathway; UMP from uracil: step 1/1. With respect to regulation, allosterically activated by GTP. Functionally, catalyzes the conversion of uracil and 5-phospho-alpha-D-ribose 1-diphosphate (PRPP) to UMP and diphosphate. This Haloquadratum walsbyi (strain DSM 16790 / HBSQ001) protein is Uracil phosphoribosyltransferase.